The chain runs to 567 residues: Dihydroxy-acid dehydratase 2 (567 aa).

Cysteine 56 provides a ligand contact to [2Fe-2S] cluster. Aspartate 88 is a binding site for Mg(2+). A [2Fe-2S] cluster-binding site is contributed by cysteine 129. The Mg(2+) site is built by aspartate 130 and lysine 131. At lysine 131 the chain carries N6-carboxylysine. [2Fe-2S] cluster is bound at residue cysteine 206. Mg(2+) is bound at residue glutamate 457. Serine 483 serves as the catalytic Proton acceptor.

Belongs to the IlvD/Edd family. In terms of assembly, homodimer. Requires [2Fe-2S] cluster as cofactor. Mg(2+) serves as cofactor.

The catalysed reaction is (2R)-2,3-dihydroxy-3-methylbutanoate = 3-methyl-2-oxobutanoate + H2O. It catalyses the reaction (2R,3R)-2,3-dihydroxy-3-methylpentanoate = (S)-3-methyl-2-oxopentanoate + H2O. It functions in the pathway amino-acid biosynthesis; L-isoleucine biosynthesis; L-isoleucine from 2-oxobutanoate: step 3/4. The protein operates within amino-acid biosynthesis; L-valine biosynthesis; L-valine from pyruvate: step 3/4. In terms of biological role, functions in the biosynthesis of branched-chain amino acids. Catalyzes the dehydration of (2R,3R)-2,3-dihydroxy-3-methylpentanoate (2,3-dihydroxy-3-methylvalerate) into 2-oxo-3-methylpentanoate (2-oxo-3-methylvalerate) and of (2R)-2,3-dihydroxy-3-methylbutanoate (2,3-dihydroxyisovalerate) into 2-oxo-3-methylbutanoate (2-oxoisovalerate), the penultimate precursor to L-isoleucine and L-valine, respectively. This chain is Dihydroxy-acid dehydratase 2, found in Corynebacterium efficiens (strain DSM 44549 / YS-314 / AJ 12310 / JCM 11189 / NBRC 100395).